The following is a 685-amino-acid chain: Diphthine--ammonia ligase (685 aa).

This sequence in the C-terminal section; belongs to the RutC family. The protein in the N-terminal section; belongs to the Diphthine--ammonia ligase family. In terms of assembly, interacts with elongation factor 2 (eEF-2; EFT1 or EFT2).

Its subcellular location is the cytoplasm. It catalyses the reaction diphthine-[translation elongation factor 2] + NH4(+) + ATP = diphthamide-[translation elongation factor 2] + AMP + diphosphate + H(+). The protein operates within protein modification; peptidyl-diphthamide biosynthesis. Functionally, amidase that catalyzes the last step of diphthamide biosynthesis using ammonium and ATP. Diphthamide biosynthesis consists in the conversion of an L-histidine residue in the translation elongation factor eEF-2 (EFT1 or EFT2) to diphthamide. This chain is Diphthine--ammonia ligase (DPH6), found in Saccharomyces cerevisiae (strain ATCC 204508 / S288c) (Baker's yeast).